The chain runs to 800 residues: Nucleolar complex protein 3 homolog (800 aa).

The interval 37-90 (STIKKYRKEQRKLRQAVKDAVSKKPFPLEDPKSKRPVKGMEREEEDEEDQALPL) is disordered. Residues 40–51 (KKYRKEQRKLRQ) show a composition bias toward basic residues. Residues 52 to 77 (AVKDAVSKKPFPLEDPKSKRPVKGME) are compositionally biased toward basic and acidic residues. Residues 78-90 (REEEDEEDQALPL) show a composition bias toward acidic residues. K333 is covalently cross-linked (Glycyl lysine isopeptide (Lys-Gly) (interchain with G-Cter in SUMO2)). The stretch at 450 to 489 (FKEKRKTLSRMQRKWKKAEEKLERELREAEASESTERKLK) forms a coiled coil.

This sequence belongs to the CBF/MAK21 family.

It localises to the nucleus. It is found in the nucleolus. This is Nucleolar complex protein 3 homolog (NOC3L) from Cricetulus griseus (Chinese hamster).